A 382-amino-acid chain; its full sequence is Mannitol-1-phosphate 5-dehydrogenase (382 aa).

Residue 3–14 coordinates NAD(+); that stretch reads ALHFGAGNIGRG. Residue K269 is modified to N6-acetyllysine.

Belongs to the mannitol dehydrogenase family.

It carries out the reaction D-mannitol 1-phosphate + NAD(+) = beta-D-fructose 6-phosphate + NADH + H(+). This chain is Mannitol-1-phosphate 5-dehydrogenase, found in Escherichia coli O127:H6 (strain E2348/69 / EPEC).